A 791-amino-acid polypeptide reads, in one-letter code: Interleukin-17 receptor C (791 aa).

Positions 1-20 are cleaved as a signal peptide; the sequence is MPVPWFLLSLALGRSPVVLS. The Extracellular portion of the chain corresponds to 21-538; it reads LERLVGPQDA…CPMDKYIHKR (518 aa). Residues asparagine 189 and asparagine 257 are each glycosylated (N-linked (GlcNAc...) asparagine). A disulfide bridge links cysteine 265 with cysteine 277. N-linked (GlcNAc...) asparagine glycans are attached at residues asparagine 284, asparagine 297, asparagine 324, and asparagine 334. 3 disulfide bridges follow: cysteine 341-cysteine 391, cysteine 343-cysteine 359, and cysteine 400-cysteine 409. 3 N-linked (GlcNAc...) asparagine glycosylation sites follow: asparagine 420, asparagine 443, and asparagine 477. Residues cysteine 439 and cysteine 453 are joined by a disulfide bond. Cystine bridges form between cysteine 481-cysteine 488 and cysteine 515-cysteine 529. A helical membrane pass occupies residues 539–559; sequence WALVWLACLLFAAALSLILLL. Topologically, residues 560–791 are cytoplasmic; that stretch reads KKDHAKGWLR…GAGPGAGDGT (232 aa). Residues 583-735 form the SEFIR domain; it reads GRAALLLYSA…LPSQLPDFLG (153 aa). A disordered region spans residues 762-791; the sequence is ALDSYFHPPGTPAPGRGVGPGAGPGAGDGT. Over residues 777–791 the composition is skewed to gly residues; it reads RGVGPGAGPGAGDGT.

As to quaternary structure, homodimer; disulfide-linked. Heterodimer with IL17RA. Heterodimerization with IL17RA is independent of the cytoplasmic tail. Associates with non-glycosylated IL17RA constitutively. Binding of IL17A and IL17F induces association with glycosylated IL17RA. Forms complexes with 2:1 binding stoichiometry: two receptor chains for one interleukin molecule. IL17A homodimer preferentially drives the formation of IL17RA-IL17RC heterodimeric receptor complex, whereas IL17F homodimer forms predominantly complexes with IL17RC homodimer. IL17A-IL17F forms complexes with IL17RA-IL17RC, but with lower affinity when compared to IL17A homodimer. IL17RC chain cannot distinguish between IL17A and IL17F molecules, potentially enabling the formation of topologically distinct complexes. Interacts (through SEFIR domain and extended downstream region) with TRAF3IP2/ACT1 (phosphorylated). In terms of tissue distribution, expressed in prostate, skeletal muscle, kidney and placenta (at protein level). Expressed in brain, cartilage, colon, heart, intestine, kidney, liver, lung, muscle, placenta, and prostate. Also detected in thyroid, trachea and adrenal gland. Low expression in thymus and leukocytes.

Its subcellular location is the cell membrane. Receptor for IL17A and IL17F, major effector cytokines of innate and adaptive immune system involved in antimicrobial host defense and maintenance of tissue integrity. Receptor for IL17A and IL17F, major effector cytokines of innate and adaptive immune system involved in antimicrobial host defense and maintenance of tissue integrity. Receptor for IL17A and IL17F homodimers as part of a heterodimeric complex with IL17RA. Receptor for the heterodimer formed by IL17A and IL17B as part of a heterodimeric complex with IL17RA. Has also been shown to be the cognate receptor for IL17F and to bind IL17A with high affinity without the need for IL17RA. Upon binding of IL17F homodimer triggers downstream activation of TRAF6 and NF-kappa-B signaling pathway. Induces transcriptional activation of IL33, a potent cytokine that stimulates group 2 innate lymphoid cells and adaptive T-helper 2 cells involved in pulmonary allergic response to fungi. Promotes sympathetic innervation of peripheral organs by coordinating the communication between gamma-delta T cells and parenchymal cells. Stimulates sympathetic innervation of thermogenic adipose tissue by driving TGFB1 expression. Binding of IL17A-IL17F to IL17RA-IL17RC heterodimeric receptor complex triggers homotypic interaction of IL17RA and IL17RC chains with TRAF3IP2 adapter through SEFIR domains. This leads to downstream TRAF6-mediated activation of NF-kappa-B and MAPkinase pathways ultimately resulting in transcriptional activation of cytokines, chemokines, antimicrobial peptides and matrix metalloproteinases, with potential strong immune inflammation. Primarily induces neutrophil activation and recruitment at infection and inflammatory sites. Stimulates the production of antimicrobial beta-defensins DEFB1, DEFB103A, and DEFB104A by mucosal epithelial cells, limiting the entry of microbes through the epithelial barriers. Its function is as follows. Receptor for both IL17A and IL17F. Functionally, does not bind IL17A or IL17F. The sequence is that of Interleukin-17 receptor C (IL17RC) from Homo sapiens (Human).